We begin with the raw amino-acid sequence, 208 residues long: Ribonuclease HII (208 aa).

The 191-residue stretch at 18–208 folds into the RNase H type-2 domain; it reads GFYAGVDEVG…RPVKERLEAC (191 aa). Residues aspartate 24, glutamate 25, and aspartate 116 each coordinate a divalent metal cation.

This sequence belongs to the RNase HII family. It depends on Mn(2+) as a cofactor. The cofactor is Mg(2+).

It localises to the cytoplasm. The catalysed reaction is Endonucleolytic cleavage to 5'-phosphomonoester.. Endonuclease that specifically degrades the RNA of RNA-DNA hybrids. This Shewanella loihica (strain ATCC BAA-1088 / PV-4) protein is Ribonuclease HII.